Here is a 330-residue protein sequence, read N- to C-terminus: Sulfate/thiosulfate import ATP-binding protein CysA (330 aa).

Residues Ile3–Leu237 form the ABC transporter domain. Gly35 to Thr42 is a binding site for ATP.

This sequence belongs to the ABC transporter superfamily. Sulfate/tungstate importer (TC 3.A.1.6) family. The complex is composed of two ATP-binding proteins (CysA), two transmembrane proteins (CysT and CysW) and a solute-binding protein (CysP).

The protein resides in the cell inner membrane. It carries out the reaction sulfate(out) + ATP + H2O = sulfate(in) + ADP + phosphate + H(+). The enzyme catalyses thiosulfate(out) + ATP + H2O = thiosulfate(in) + ADP + phosphate + H(+). In terms of biological role, part of the ABC transporter complex CysAWTP involved in sulfate/thiosulfate import. Responsible for energy coupling to the transport system. The protein is Sulfate/thiosulfate import ATP-binding protein CysA of Pectobacterium atrosepticum (strain SCRI 1043 / ATCC BAA-672) (Erwinia carotovora subsp. atroseptica).